Here is a 695-residue protein sequence, read N- to C-terminus: Polyribonucleotide nucleotidyltransferase (695 aa).

2 residues coordinate Mg(2+): aspartate 486 and aspartate 492. Residues 553–612 (PRIETMQINTSKIATVIGPGGKQIRQIIERSGAQVDINDDGVINIAASTQESINKAKELI) enclose the KH domain. Residues 622 to 690 (GKVYNGRVTS…EKGQLKLSHK (69 aa)) enclose the S1 motif domain.

It belongs to the polyribonucleotide nucleotidyltransferase family. It depends on Mg(2+) as a cofactor.

The protein resides in the cytoplasm. The enzyme catalyses RNA(n+1) + phosphate = RNA(n) + a ribonucleoside 5'-diphosphate. Its function is as follows. Involved in mRNA degradation. Catalyzes the phosphorolysis of single-stranded polyribonucleotides processively in the 3'- to 5'-direction. This Chlamydia trachomatis serovar D (strain ATCC VR-885 / DSM 19411 / UW-3/Cx) protein is Polyribonucleotide nucleotidyltransferase.